Reading from the N-terminus, the 440-residue chain is Enolase 1 (440 aa).

Positions 161 and 170 each coordinate substrate. The active-site Proton donor is glutamate 213. Mg(2+) is bound by residues aspartate 248, glutamate 297, and aspartate 324. Glutamate 297 and aspartate 324 together coordinate substrate. The Proton acceptor role is filled by lysine 349. Residues 376–379 (SHRS) and lysine 400 contribute to the substrate site.

The protein belongs to the enolase family. As to quaternary structure, homodimer. Mg(2+) is required as a cofactor.

The protein localises to the cytoplasm. It catalyses the reaction (2R)-2-phosphoglycerate = phosphoenolpyruvate + H2O. It functions in the pathway carbohydrate degradation; glycolysis; pyruvate from D-glyceraldehyde 3-phosphate: step 4/5. This chain is Enolase 1 (ENO1), found in Candida albicans (strain SC5314 / ATCC MYA-2876) (Yeast).